A 321-amino-acid chain; its full sequence is GDP-L-fucose synthase (321 aa).

14 to 20 provides a ligand contact to NADP(+); that stretch reads GGSGLVG. Tyr-143 acts as the Proton donor/acceptor in catalysis. Residues Lys-147, 170–173, and His-186 contribute to the NADP(+) site; that span reads PTNV. Residues Lys-194, Trp-208, Arg-215, and Asp-277 each contribute to the substrate site.

Belongs to the NAD(P)-dependent epimerase/dehydratase family. Fucose synthase subfamily. In terms of assembly, homodimer.

It carries out the reaction GDP-beta-L-fucose + NADP(+) = GDP-4-dehydro-alpha-D-rhamnose + NADPH + H(+). It functions in the pathway nucleotide-sugar biosynthesis; GDP-L-fucose biosynthesis via de novo pathway; GDP-L-fucose from GDP-alpha-D-mannose: step 2/2. Its function is as follows. Catalyzes the two-step NADP-dependent conversion of GDP-4-dehydro-6-deoxy-D-mannose to GDP-fucose, involving an epimerase and a reductase reaction. The protein is GDP-L-fucose synthase (GFUS) of Pongo abelii (Sumatran orangutan).